Consider the following 297-residue polypeptide: Glycerol-3-phosphate dehydrogenase [NAD(P)+] (297 aa).

3 residues coordinate NADPH: Trp-11, Arg-33, and Lys-79. The sn-glycerol 3-phosphate site is built by Lys-79, Gly-107, and Ser-109. Residue Ala-111 participates in NADPH binding. Residues Lys-161, Asp-214, Ser-224, Arg-225, and Asn-226 each contribute to the sn-glycerol 3-phosphate site. Catalysis depends on Lys-161, which acts as the Proton acceptor. Arg-225 provides a ligand contact to NADPH. NADPH is bound by residues Val-249 and Glu-251.

Belongs to the NAD-dependent glycerol-3-phosphate dehydrogenase family.

It localises to the cytoplasm. It catalyses the reaction sn-glycerol 3-phosphate + NAD(+) = dihydroxyacetone phosphate + NADH + H(+). It carries out the reaction sn-glycerol 3-phosphate + NADP(+) = dihydroxyacetone phosphate + NADPH + H(+). It functions in the pathway membrane lipid metabolism; glycerophospholipid metabolism. Catalyzes the reduction of the glycolytic intermediate dihydroxyacetone phosphate (DHAP) to sn-glycerol 3-phosphate (G3P), the key precursor for phospholipid synthesis. The sequence is that of Glycerol-3-phosphate dehydrogenase [NAD(P)+] from Campylobacter jejuni subsp. jejuni serotype O:23/36 (strain 81-176).